Reading from the N-terminus, the 113-residue chain is Small ribosomal subunit protein bS6 (113 aa).

It belongs to the bacterial ribosomal protein bS6 family.

In terms of biological role, binds together with bS18 to 16S ribosomal RNA. This is Small ribosomal subunit protein bS6 from Pseudoalteromonas translucida (strain TAC 125).